Here is a 573-residue protein sequence, read N- to C-terminus: Sulfite reductase [NADPH] hemoprotein beta-component (573 aa).

The [4Fe-4S] cluster site is built by cysteine 438, cysteine 444, cysteine 483, and cysteine 487. Residue cysteine 487 coordinates siroheme.

This sequence belongs to the nitrite and sulfite reductase 4Fe-4S domain family. In terms of assembly, alpha(8)-beta(8). The alpha component is a flavoprotein, the beta component is a hemoprotein. Siroheme is required as a cofactor. Requires [4Fe-4S] cluster as cofactor.

The catalysed reaction is hydrogen sulfide + 3 NADP(+) + 3 H2O = sulfite + 3 NADPH + 4 H(+). It participates in sulfur metabolism; hydrogen sulfide biosynthesis; hydrogen sulfide from sulfite (NADPH route): step 1/1. In terms of biological role, component of the sulfite reductase complex that catalyzes the 6-electron reduction of sulfite to sulfide. This is one of several activities required for the biosynthesis of L-cysteine from sulfate. The sequence is that of Sulfite reductase [NADPH] hemoprotein beta-component from Geobacillus thermodenitrificans (strain NG80-2).